Consider the following 148-residue polypeptide: Putative cyclin-dependent kinase inhibitor SPL2 (148 aa).

A phosphoserine mark is found at Ser-59 and Ser-86.

It is found in the cytoplasmic granule. Its subcellular location is the cytoplasm. In terms of biological role, putative cyclin-dependent kinase (CDK) inhibitor necessary and sufficient for PHO pathway-dependent down-regulation of low-affinity phosphate transport. The protein is Putative cyclin-dependent kinase inhibitor SPL2 (SPL2) of Saccharomyces cerevisiae (strain ATCC 204508 / S288c) (Baker's yeast).